The following is a 330-amino-acid chain: Ferredoxin--NADP reductase (330 aa).

E35, Q43, Y48, V90, F123, D285, and T326 together coordinate FAD.

This sequence belongs to the ferredoxin--NADP reductase type 2 family. As to quaternary structure, homodimer. FAD is required as a cofactor.

The catalysed reaction is 2 reduced [2Fe-2S]-[ferredoxin] + NADP(+) + H(+) = 2 oxidized [2Fe-2S]-[ferredoxin] + NADPH. The polypeptide is Ferredoxin--NADP reductase (Streptococcus pyogenes serotype M1).